Consider the following 229-residue polypeptide: Movement and silencing protein TGBp1 (229 aa).

One can recognise a (+)RNA virus helicase ATP-binding domain in the interval 1 to 114; that stretch reads MVEFTKRLLL…PAAQVPHFVK (114 aa). Residues 115-229 enclose the (+)RNA virus helicase C-terminal domain; that stretch reads LFSHRCGLNS…MSFDAADTSA (115 aa).

The protein belongs to the Tymovirales TGBp1 protein family. In terms of assembly, homodimer and homooligomer. Interacts with capsid protein. Interacts with host AGO1; this interaction targets the host protein for degradation, thereby suppressing the antiviral RNA silencing.

The protein resides in the host cytoplasm. In terms of biological role, transports viral genome to neighboring plant cells directly through plasmosdesmata, without any budding. The movement protein allows efficient cell to cell propagation, by bypassing the host cell wall barrier. Increases plasmodesma size exclusion limit. Acts as a suppressor of RNA-mediated gene silencing, also known as post-transcriptional gene silencing (PTGS), a mechanism of plant viral defense that limits the accumulation of viral RNAs. This Strawberry mild yellow edge-associated virus (SMYEaV) protein is Movement and silencing protein TGBp1.